Reading from the N-terminus, the 81-residue chain is Toxin MIT1 (81 aa).

5 disulfides stabilise this stretch: Cys-7-Cys-19, Cys-13-Cys-31, Cys-18-Cys-59, Cys-41-Cys-67, and Cys-61-Cys-77.

This sequence belongs to the AVIT (prokineticin) family. Expressed by the venom gland.

It localises to the secreted. Potent agonist for both PKR1/PROKR1 and PKR2/PROKR2. Potently contracts gastrointestinal (GI) smooth muscle. This Dendroaspis polylepis polylepis (Black mamba) protein is Toxin MIT1.